The chain runs to 181 residues: Oligoribonuclease (181 aa).

The region spanning 8–171 (LIWIDLEMTG…DDIRESVAEL (164 aa)) is the Exonuclease domain. Tyrosine 129 is an active-site residue.

The protein belongs to the oligoribonuclease family.

Its subcellular location is the cytoplasm. In terms of biological role, 3'-to-5' exoribonuclease specific for small oligoribonucleotides. The protein is Oligoribonuclease of Klebsiella pneumoniae subsp. pneumoniae (strain ATCC 700721 / MGH 78578).